The primary structure comprises 357 residues: GTPase Obg (357 aa).

An Obg domain is found at 1–159; the sequence is MKFVDEAFID…RNLKLELKVL (159 aa). The region spanning 160 to 334 is the OBG-type G domain; it reads ADVGLLGMPN…LVQSIFQHVH (175 aa). GTP contacts are provided by residues 166-173, 191-195, 213-216, 284-287, and 315-317; these read GMPNAGKS, FTTLH, DIPG, NKLD, and SAL. 2 residues coordinate Mg(2+): Ser-173 and Thr-193.

It belongs to the TRAFAC class OBG-HflX-like GTPase superfamily. OBG GTPase family. Monomer. The cofactor is Mg(2+).

It is found in the cytoplasm. An essential GTPase which binds GTP, GDP and possibly (p)ppGpp with moderate affinity, with high nucleotide exchange rates and a fairly low GTP hydrolysis rate. Plays a role in control of the cell cycle, stress response, ribosome biogenesis and in those bacteria that undergo differentiation, in morphogenesis control. This Acidovorax ebreus (strain TPSY) (Diaphorobacter sp. (strain TPSY)) protein is GTPase Obg.